A 113-amino-acid chain; its full sequence is U11-theraphotoxin-Hhn1q (113 aa).

Positions M1 to A21 are cleaved as a signal peptide. A propeptide spanning residues D22–R74 is cleaved from the precursor. A disordered region spans residues E61–C82. Disulfide bonds link C75-C90, C82-C95, and C89-C110.

It belongs to the neurotoxin 14 (magi-1) family. 01 (HNTX-16) subfamily. In terms of tissue distribution, expressed by the venom gland.

The protein resides in the secreted. Its function is as follows. Probable ion channel inhibitor. The chain is U11-theraphotoxin-Hhn1q from Cyriopagopus hainanus (Chinese bird spider).